Consider the following 424-residue polypeptide: Virion nicking-joining enzyme (424 aa).

2 PLD phosphodiesterase domains span residues 110–137 and 320–346; these read LGGVLHTKFWISDNTHIYLGSANMDWRS and YSRVNHAKYMVTDKTAYIGTSNWTGNY.

Belongs to the orthopoxvirus OPG042 family.

It localises to the virion. Functionally, DNA nicking enzyme that cleaves extruded cruciform DNA at its tip. Probably nicks viral hairpins. The protein is Virion nicking-joining enzyme (OPG042) of Vaccinia virus (strain Western Reserve) (VACV).